A 31-amino-acid chain; its full sequence is Photosystem II reaction center protein T (31 aa).

Residues 3–23 form a helical membrane-spanning segment; that stretch reads SVAYILILTMALAVLFFAIAF.

It belongs to the PsbT family. PSII is composed of 1 copy each of membrane proteins PsbA, PsbB, PsbC, PsbD, PsbE, PsbF, PsbH, PsbI, PsbJ, PsbK, PsbL, PsbM, PsbT, PsbX, PsbY, PsbZ, Psb30/Ycf12, peripheral proteins PsbO, CyanoQ (PsbQ), PsbU, PsbV and a large number of cofactors. It forms dimeric complexes.

The protein resides in the cellular thylakoid membrane. Found at the monomer-monomer interface of the photosystem II (PS II) dimer, plays a role in assembly and dimerization of PSII. PSII is a light-driven water plastoquinone oxidoreductase, using light energy to abstract electrons from H(2)O, generating a proton gradient subsequently used for ATP formation. This is Photosystem II reaction center protein T from Gloeothece citriformis (strain PCC 7424) (Cyanothece sp. (strain PCC 7424)).